The primary structure comprises 366 residues: MQACAVIAEFNPFHNGHQYLLEQARKVTKADLVIVIMSGNFVQRGEPALINKWERARVAINCGADLVVEIPTEYAIDSAKEFAHAGVEIAQKLGASFLAFGSENPDLDFENESKILDRQFDQRAKKYNQNFAAQLFDDTAIMNSNDILGINYAYWNSKSKRGLQLIPLQREQADHRDTEIKGSIASASAIRRAALEQSEYFNAVPKASLKAIRNAKLTSWEDFWIMLNYRLLTSTPQELRHIKGVTEGFENRILNLVDKSNSFTELMQKLKTKRYTYTRIQRSLTNILLNIQATPFNLTKTRLLATNQLGRIFIREAALGSVVMTKVTKEDFENNYAITKRADDLYQLVSPYQWGKGPIIKKNVKE.

ATP-binding positions include 7–20, Gly-101, Asn-145, and Arg-170; that span reads IAEFNPFHNGHQYL.

The protein belongs to the TmcAL family.

The protein localises to the cytoplasm. It carries out the reaction cytidine(34) in elongator tRNA(Met) + acetate + ATP = N(4)-acetylcytidine(34) in elongator tRNA(Met) + AMP + diphosphate. Functionally, catalyzes the formation of N(4)-acetylcytidine (ac(4)C) at the wobble position of elongator tRNA(Met), using acetate and ATP as substrates. First activates an acetate ion to form acetyladenylate (Ac-AMP) and then transfers the acetyl group to tRNA to form ac(4)C34. In Pediococcus pentosaceus (strain ATCC 25745 / CCUG 21536 / LMG 10740 / 183-1w), this protein is tRNA(Met) cytidine acetate ligase.